A 188-amino-acid polypeptide reads, in one-letter code: MHRNDSQRLGKPGGAPESLQMANNNFLSTLSPEHCRPLAGECMNKLKCGAAEAEIMNLPERVGTFSAIPALGGISLPPGVIVMTALHSPAAASAAVTDSAFQIANLADCPQNNSSGAGGNPAKKKRKRCGVCVPCKRLINCGVCSSCRNRKTGHQICKFRKCEELKKKPGTSLERTPVPSAEAFRWFF.

The segment at 1 to 20 (MHRNDSQRLGKPGGAPESLQ) is disordered. Residues 122–163 (AKKKRKRCGVCVPCKRLINCGVCSSCRNRKTGHQICKFRKCE) form a CXXC-type zinc finger. Residues C129, C132, C135, C141, C144, C147, C157, and C162 each coordinate Zn(2+).

The protein localises to the cytoplasm. Acts as a negative regulator of the Wnt signaling pathway required for anterior neural structure formation. Binds preferentially to DNA containing cytidine-phosphate-guanosine (CpG) dinucleotides over CpH (H=A, T, and C), hemimethylated-CpG and hemimethylated-hydroxymethyl-CpG. This is CXXC-type zinc finger protein 4 (cxxc4) from Xenopus tropicalis (Western clawed frog).